Here is a 167-residue protein sequence, read N- to C-terminus: MPKYNVSDFKSKFDKELTNHFNKNGYKQSFVFEDIRLLIAIACIIPAGLAFGIEYVYGFGVLKSYLKYLLPLYFLASCLLTFWSSVVKGSTVYVATKKERHIKISADTFLPLKNKPLITTKFTVLKNRNAVQLEWSVPVAHIFEEDGQISSATFEAEISKYLSQIEN.

The Cytoplasmic segment spans residues 1–36; the sequence is MPKYNVSDFKSKFDKELTNHFNKNGYKQSFVFEDIR. The chain crosses the membrane as a helical span at residues 37 to 57; it reads LLIAIACIIPAGLAFGIEYVY. At 58-68 the chain is on the lumenal side; it reads GFGVLKSYLKY. The chain crosses the membrane as a helical span at residues 69 to 89; that stretch reads LLPLYFLASCLLTFWSSVVKG. At 90-167 the chain is on the cytoplasmic side; sequence STVYVATKKE…ISKYLSQIEN (78 aa).

It belongs to the SPCS2 family. In terms of assembly, component of the signal peptidase complex (SPC) composed of a catalytic subunit sec11 and three accessory subunits spc1, spc2 and spc3. The complex induces a local thinning of the ER membrane which is used to measure the length of the signal peptide (SP) h-region of protein substrates. This ensures the selectivity of the complex towards h-regions shorter than 18-20 amino acids. SPC associates with the translocon complex.

The protein resides in the endoplasmic reticulum membrane. Its function is as follows. Component of the signal peptidase complex (SPC) which catalyzes the cleavage of N-terminal signal sequences from nascent proteins as they are translocated into the lumen of the endoplasmic reticulum. Enhances the enzymatic activity of SPC and facilitates the interactions between different components of the translocation site. This is Signal peptidase complex subunit 2 (spc2) from Schizosaccharomyces pombe (strain 972 / ATCC 24843) (Fission yeast).